Reading from the N-terminus, the 130-residue chain is Sirohydrochlorin cobaltochelatase (130 aa).

Residue His-12 is the Proton acceptor of the active site. Residue His-12 coordinates Co(2+). His-12 provides a ligand contact to Ni(2+). Substrate contacts are provided by residues Glu-48 and 73–78; that span reads LASGVH. His-78 contacts Co(2+). His-78 contacts Ni(2+).

This sequence belongs to the CbiX family. CbiXS subfamily. Homotetramer; dimer of dimers.

The enzyme catalyses Co-sirohydrochlorin + 2 H(+) = sirohydrochlorin + Co(2+). It catalyses the reaction Ni-sirohydrochlorin + 2 H(+) = sirohydrochlorin + Ni(2+). Its pathway is cofactor biosynthesis; adenosylcobalamin biosynthesis; cob(II)yrinate a,c-diamide from sirohydrochlorin (anaerobic route): step 1/10. Catalyzes the insertion of Co(2+) into sirohydrochlorin as part of the anaerobic pathway to cobalamin biosynthesis. Involved in the biosynthesis of the unique nickel-containing tetrapyrrole coenzyme F430, the prosthetic group of methyl-coenzyme M reductase (MCR), which plays a key role in methanogenesis and anaerobic methane oxidation. Catalyzes the insertion of Ni(2+) into sirohydrochlorin to yield Ni-sirohydrochlorin. The protein is Sirohydrochlorin cobaltochelatase of Methanosarcina barkeri (strain Fusaro / DSM 804).